A 286-amino-acid chain; its full sequence is ATP synthase gamma chain (286 aa).

Belongs to the ATPase gamma chain family. In terms of assembly, F-type ATPases have 2 components, CF(1) - the catalytic core - and CF(0) - the membrane proton channel. CF(1) has five subunits: alpha(3), beta(3), gamma(1), delta(1), epsilon(1). CF(0) has three main subunits: a, b and c.

It is found in the cell inner membrane. Produces ATP from ADP in the presence of a proton gradient across the membrane. The gamma chain is believed to be important in regulating ATPase activity and the flow of protons through the CF(0) complex. In Shewanella sp. (strain MR-4), this protein is ATP synthase gamma chain.